Consider the following 78-residue polypeptide: Large ribosomal subunit protein bL28 (78 aa).

Belongs to the bacterial ribosomal protein bL28 family.

The protein is Large ribosomal subunit protein bL28 of Psychrobacter arcticus (strain DSM 17307 / VKM B-2377 / 273-4).